Here is a 218-residue protein sequence, read N- to C-terminus: Probable transaldolase (218 aa).

The active-site Schiff-base intermediate with substrate is the Lys87.

The protein belongs to the transaldolase family. Type 3B subfamily.

Its subcellular location is the cytoplasm. It catalyses the reaction D-sedoheptulose 7-phosphate + D-glyceraldehyde 3-phosphate = D-erythrose 4-phosphate + beta-D-fructose 6-phosphate. Its pathway is carbohydrate degradation; pentose phosphate pathway; D-glyceraldehyde 3-phosphate and beta-D-fructose 6-phosphate from D-ribose 5-phosphate and D-xylulose 5-phosphate (non-oxidative stage): step 2/3. Its function is as follows. Transaldolase is important for the balance of metabolites in the pentose-phosphate pathway. The polypeptide is Probable transaldolase (Cytophaga hutchinsonii (strain ATCC 33406 / DSM 1761 / CIP 103989 / NBRC 15051 / NCIMB 9469 / D465)).